The sequence spans 131 residues: Translation initiation factor 5A (131 aa).

Position 37 is a hypusine (lysine 37).

It belongs to the eIF-5A family.

The protein resides in the cytoplasm. Functionally, functions by promoting the formation of the first peptide bond. This is Translation initiation factor 5A from Methanococcus maripaludis (strain DSM 14266 / JCM 13030 / NBRC 101832 / S2 / LL).